The chain runs to 251 residues: uncharacterized protein (251 aa).

The a divalent metal cation site is built by His5, His7, Glu101, His132, His163, and Asp209.

It belongs to the metallo-dependent hydrolases superfamily. TatD-type hydrolase family. A divalent metal cation serves as cofactor.

This is an uncharacterized protein from Methanocaldococcus jannaschii (strain ATCC 43067 / DSM 2661 / JAL-1 / JCM 10045 / NBRC 100440) (Methanococcus jannaschii).